The following is a 411-amino-acid chain: Serine hydroxymethyltransferase (411 aa).

(6S)-5,6,7,8-tetrahydrofolate-binding positions include leucine 113 and 117–119 (GHL). Residue lysine 222 is modified to N6-(pyridoxal phosphate)lysine. 346 to 348 (SPF) is a binding site for (6S)-5,6,7,8-tetrahydrofolate.

It belongs to the SHMT family. Homodimer. Pyridoxal 5'-phosphate is required as a cofactor.

The protein resides in the cytoplasm. It carries out the reaction (6R)-5,10-methylene-5,6,7,8-tetrahydrofolate + glycine + H2O = (6S)-5,6,7,8-tetrahydrofolate + L-serine. It functions in the pathway one-carbon metabolism; tetrahydrofolate interconversion. It participates in amino-acid biosynthesis; glycine biosynthesis; glycine from L-serine: step 1/1. In terms of biological role, catalyzes the reversible interconversion of serine and glycine with tetrahydrofolate (THF) serving as the one-carbon carrier. This reaction serves as the major source of one-carbon groups required for the biosynthesis of purines, thymidylate, methionine, and other important biomolecules. Also exhibits THF-independent aldolase activity toward beta-hydroxyamino acids, producing glycine and aldehydes, via a retro-aldol mechanism. The chain is Serine hydroxymethyltransferase from Prochlorococcus marinus (strain NATL2A).